The chain runs to 250 residues: NAD-dependent protein deacylase (250 aa).

Residues 1–250 (MIVEVARVLA…VVHEVRRLLQ (250 aa)) form the Deacetylase sirtuin-type domain. 20–39 (GAGISAESGVPTFRGKDGLW) contacts NAD(+). Substrate is bound by residues Y64 and R67. 98–101 (QNVD) contributes to the NAD(+) binding site. Catalysis depends on H116, which acts as the Proton acceptor. C124, C127, C150, and C153 together coordinate Zn(2+). Residues 190 to 192 (GTS), 216 to 218 (NVE), and A234 contribute to the NAD(+) site.

It belongs to the sirtuin family. Class III subfamily. Zn(2+) is required as a cofactor.

The protein resides in the cytoplasm. It carries out the reaction N(6)-acetyl-L-lysyl-[protein] + NAD(+) + H2O = 2''-O-acetyl-ADP-D-ribose + nicotinamide + L-lysyl-[protein]. The catalysed reaction is N(6)-succinyl-L-lysyl-[protein] + NAD(+) + H2O = 2''-O-succinyl-ADP-D-ribose + nicotinamide + L-lysyl-[protein]. In terms of biological role, NAD-dependent lysine deacetylase and desuccinylase that specifically removes acetyl and succinyl groups on target proteins. Modulates the activities of several proteins which are inactive in their acylated form. Deacetylates the N-terminal lysine residue of Alba, the major archaeal chromatin protein and that, in turn, increases Alba's DNA binding affinity, thereby repressing transcription. This is NAD-dependent protein deacylase from Pyrococcus abyssi (strain GE5 / Orsay).